Consider the following 333-residue polypeptide: Photosystem II assembly lipoprotein Ycf48 (333 aa).

Residues 1-23 (MKRLLNSATQLLLVLVLGISLSG) form the signal peptide. Cys-24 is lipidated: N-palmitoyl cysteine. Cys-24 is lipidated: S-diacylglycerol cysteine.

This sequence belongs to the Ycf48 family. In terms of assembly, part of early PSII assembly complexes which includes D1 (psbA) and PsbI; not found in mature PSII. Binds to the lumenal side of PSII complexes. Interacts with YidC.

The protein localises to the cellular thylakoid membrane. In terms of biological role, a factor required for optimal assembly of photosystem II (PSII), acting in the early stages of PSII assembly. Also plays a role in replacement of photodamaged D1 (psbA). Assists YidC in synthesis of chlorophyll-binding proteins. The sequence is that of Photosystem II assembly lipoprotein Ycf48 from Synechococcus sp. (strain CC9605).